We begin with the raw amino-acid sequence, 786 residues long: LPS-assembly protein LptD (786 aa).

The N-terminal stretch at 1–39 is a signal peptide; it reads MPPKPLFPNVFPGDGAPRKRRLALALLAVPGLVPAVSYA.

Belongs to the LptD family. In terms of assembly, component of the lipopolysaccharide transport and assembly complex. Interacts with LptE and LptA.

The protein localises to the cell outer membrane. Together with LptE, is involved in the assembly of lipopolysaccharide (LPS) at the surface of the outer membrane. The protein is LPS-assembly protein LptD of Burkholderia ambifaria (strain ATCC BAA-244 / DSM 16087 / CCUG 44356 / LMG 19182 / AMMD) (Burkholderia cepacia (strain AMMD)).